The chain runs to 372 residues: Chorismate synthase (372 aa).

NADP(+) contacts are provided by Arg48 and Arg54. Residues 125–127 (RSS), 238–239 (NA), Gly278, 293–297 (KPTSS), and Arg319 contribute to the FMN site.

Belongs to the chorismate synthase family. Homotetramer. FMNH2 is required as a cofactor.

The enzyme catalyses 5-O-(1-carboxyvinyl)-3-phosphoshikimate = chorismate + phosphate. Its pathway is metabolic intermediate biosynthesis; chorismate biosynthesis; chorismate from D-erythrose 4-phosphate and phosphoenolpyruvate: step 7/7. Catalyzes the anti-1,4-elimination of the C-3 phosphate and the C-6 proR hydrogen from 5-enolpyruvylshikimate-3-phosphate (EPSP) to yield chorismate, which is the branch point compound that serves as the starting substrate for the three terminal pathways of aromatic amino acid biosynthesis. This reaction introduces a second double bond into the aromatic ring system. The sequence is that of Chorismate synthase from Xylella fastidiosa (strain 9a5c).